Reading from the N-terminus, the 225-residue chain is Guanylate kinase (225 aa).

The Guanylate kinase-like domain maps to 20–198 (GNLFMVVAPS…ALSELQCLVA (179 aa)). 27–34 (APSGAGKS) lines the ATP pocket.

This sequence belongs to the guanylate kinase family.

The protein resides in the cytoplasm. It catalyses the reaction GMP + ATP = GDP + ADP. Essential for recycling GMP and indirectly, cGMP. In Paraburkholderia xenovorans (strain LB400), this protein is Guanylate kinase.